A 453-amino-acid chain; its full sequence is MNIVILAAGTGKRMRSALPKVLHPLAGRPLLSHVIATARTLQPSRLVVVVGHGAEQVQAAVAAPDVQFAVQAEQLGTGHAVRQALPLLDPAQPTLVLYGDVPLTRASTLRRLVDAARDGSYGILTVTLDDPTGYGRIVRDAAGFVTRIVEQKDASPEQLKIAEINTGIIITPTGQLAMWLGALKNENAQGEYYLTDVVELAIEAGFDVVTSQPDDEWETLGVNSKAQLAELERIHQRNVADALLVDGVTLADPARVDVRGTLRCGRDVSIDVNCVFEGNVTLADNVTIGPNCVIRNASVGTGTRIDAFTHIDGAELGANTVIGPYARLRPGAQLADEAHVGNFVEVKNAVIGHGSKANHLTYIGDADIGARVNIGAGTITCNYDGANKFRTVIEDDVFVGSDTQLVAPVRVGRGVTIAAGTTIWKDVAEGVLALNEKTQTAKSGYVRPVKKKS.

The interval 1–225 is pyrophosphorylase; the sequence is MNIVILAAGT…EWETLGVNSK (225 aa). Residues 6–9, Lys20, Gln71, 76–77, 98–100, Gly135, Glu150, Asn165, and Asn223 contribute to the UDP-N-acetyl-alpha-D-glucosamine site; these read LAAG, GT, and YGD. Residue Asp100 coordinates Mg(2+). Residue Asn223 coordinates Mg(2+). The linker stretch occupies residues 226–246; sequence AQLAELERIHQRNVADALLVD. The interval 247-453 is N-acetyltransferase; that stretch reads GVTLADPARV…GYVRPVKKKS (207 aa). UDP-N-acetyl-alpha-D-glucosamine is bound by residues Arg329 and Lys347. His359 functions as the Proton acceptor in the catalytic mechanism. 2 residues coordinate UDP-N-acetyl-alpha-D-glucosamine: Tyr362 and Asn373. Residues Ala376, 382–383, Ser401, and Ala419 contribute to the acetyl-CoA site; that span reads NY.

It in the N-terminal section; belongs to the N-acetylglucosamine-1-phosphate uridyltransferase family. This sequence in the C-terminal section; belongs to the transferase hexapeptide repeat family. Homotrimer. Mg(2+) serves as cofactor.

The protein resides in the cytoplasm. It carries out the reaction alpha-D-glucosamine 1-phosphate + acetyl-CoA = N-acetyl-alpha-D-glucosamine 1-phosphate + CoA + H(+). The catalysed reaction is N-acetyl-alpha-D-glucosamine 1-phosphate + UTP + H(+) = UDP-N-acetyl-alpha-D-glucosamine + diphosphate. The protein operates within nucleotide-sugar biosynthesis; UDP-N-acetyl-alpha-D-glucosamine biosynthesis; N-acetyl-alpha-D-glucosamine 1-phosphate from alpha-D-glucosamine 6-phosphate (route II): step 2/2. Its pathway is nucleotide-sugar biosynthesis; UDP-N-acetyl-alpha-D-glucosamine biosynthesis; UDP-N-acetyl-alpha-D-glucosamine from N-acetyl-alpha-D-glucosamine 1-phosphate: step 1/1. It functions in the pathway bacterial outer membrane biogenesis; LPS lipid A biosynthesis. Its function is as follows. Catalyzes the last two sequential reactions in the de novo biosynthetic pathway for UDP-N-acetylglucosamine (UDP-GlcNAc). The C-terminal domain catalyzes the transfer of acetyl group from acetyl coenzyme A to glucosamine-1-phosphate (GlcN-1-P) to produce N-acetylglucosamine-1-phosphate (GlcNAc-1-P), which is converted into UDP-GlcNAc by the transfer of uridine 5-monophosphate (from uridine 5-triphosphate), a reaction catalyzed by the N-terminal domain. This is Bifunctional protein GlmU from Burkholderia ambifaria (strain ATCC BAA-244 / DSM 16087 / CCUG 44356 / LMG 19182 / AMMD) (Burkholderia cepacia (strain AMMD)).